The primary structure comprises 117 residues: Flagellar transcriptional regulator FlhD (117 aa).

It belongs to the FlhD family. As to quaternary structure, homodimer; disulfide-linked. Forms a heterohexamer composed of two FlhC and four FlhD subunits. Each FlhC binds a FlhD dimer, forming a heterotrimer, and a hexamer assembles by dimerization of two heterotrimers.

The protein resides in the cytoplasm. In terms of biological role, functions in complex with FlhC as a master transcriptional regulator that regulates transcription of several flagellar and non-flagellar operons by binding to their promoter region. Activates expression of class 2 flagellar genes, including fliA, which is a flagellum-specific sigma factor that turns on the class 3 genes. Also regulates genes whose products function in a variety of physiological pathways. The sequence is that of Flagellar transcriptional regulator FlhD from Photorhabdus laumondii subsp. laumondii (strain DSM 15139 / CIP 105565 / TT01) (Photorhabdus luminescens subsp. laumondii).